The primary structure comprises 154 residues: Putative pre-16S rRNA nuclease (154 aa).

This sequence belongs to the YqgF nuclease family.

It is found in the cytoplasm. Functionally, could be a nuclease involved in processing of the 5'-end of pre-16S rRNA. The polypeptide is Putative pre-16S rRNA nuclease (Ruegeria pomeroyi (strain ATCC 700808 / DSM 15171 / DSS-3) (Silicibacter pomeroyi)).